Here is a 599-residue protein sequence, read N- to C-terminus: Elongation factor 4 (599 aa).

A tr-type G domain is found at 2-184 (NHIRNFSIIA…RLVRDIPAPE (183 aa)). Residues 14–19 (DHGKST) and 131–134 (NKID) each bind GTP.

Belongs to the TRAFAC class translation factor GTPase superfamily. Classic translation factor GTPase family. LepA subfamily.

The protein localises to the cell inner membrane. It catalyses the reaction GTP + H2O = GDP + phosphate + H(+). Its function is as follows. Required for accurate and efficient protein synthesis under certain stress conditions. May act as a fidelity factor of the translation reaction, by catalyzing a one-codon backward translocation of tRNAs on improperly translocated ribosomes. Back-translocation proceeds from a post-translocation (POST) complex to a pre-translocation (PRE) complex, thus giving elongation factor G a second chance to translocate the tRNAs correctly. Binds to ribosomes in a GTP-dependent manner. This Yersinia pestis (strain Pestoides F) protein is Elongation factor 4.